The following is a 766-amino-acid chain: DENN domain-containing protein 1B (766 aa).

In terms of domain architecture, uDENN spans 14–143 (DLVLKVKCHA…YNHPVPKANT (130 aa)). A cDENN domain is found at 160 to 296 (GLPTIPESRN…VVSALKNKLK (137 aa)). The region spanning 298-375 (QSTATGDGVA…DGRLAKLNAG (78 aa)) is the dDENN domain. Positions 378-382 (FSDIF) match the FXDXF motif motif. The tract at residues 472 to 523 (NEKGENREKHKLSQTHLKRPHKSLDGTLYDDDDDDDDIERASKISSEDGEET) is disordered. Residues 480-492 (KHKLSQTHLKRPH) are compositionally biased toward basic residues. The span at 499–509 (LYDDDDDDDDI) shows a compositional bias: acidic residues. At Tyr-500 the chain carries Phosphotyrosine. 4 positions are modified to phosphoserine: Ser-516, Ser-517, Ser-530, and Ser-533. Positions 547-556 (DLLGEILDTL) match the Clathrin box motif. 2 disordered regions span residues 611 to 634 (LGQD…VSSG) and 652 to 732 (LCAD…KPSK). A phosphoserine mark is found at Ser-632 and Ser-633. Positions 694 to 704 (TPGQAPLQSED) are enriched in polar residues. Residues 722 to 732 (KAGKEDTKPSK) are compositionally biased toward basic and acidic residues.

Interacts with RAB35. Interacts with clathrin heavy chain/CLTC. Interacts with components of the adapter protein complex 2 (AP-2) AP2A2 and AP2B1. Interacts with CD3E. Phosphorylated on serine and/or threonine, possibly regulating the guanine nucleotide exchange factor (GEF) activity. Expressed in a subset of dendritic cells (DCs).

Its subcellular location is the cytoplasm. It localises to the cytosol. It is found in the cytoplasmic vesicle. The protein localises to the clathrin-coated vesicle. Functionally, guanine nucleotide exchange factor (GEF) for RAB35 that acts as a regulator of T-cell receptor (TCR) internalization in TH2 cells. Acts by promoting the exchange of GDP to GTP, converting inactive GDP-bound RAB35 into its active GTP-bound form. Plays a role in clathrin-mediated endocytosis. Controls cytokine production in TH2 lymphocytes by controlling the rate of TCR internalization and routing to endosomes: acts by mediating clathrin-mediated endocytosis of TCR via its interaction with the adapter protein complex 2 (AP-2) and GEF activity. Dysregulation leads to impaired TCR down-modulation and recycling, affecting cytokine production in TH2 cells. This Mus musculus (Mouse) protein is DENN domain-containing protein 1B.